Reading from the N-terminus, the 468-residue chain is MINRLKVTFSAAAFSLLAGTALAQTPDADSALVQKGAYVARLGDCVACHTALHGQSYAGGLEIKSPIGTIYSTNITPDPTYGIGRYTFAEFDEAVRHGIRKDGSTLYPAMPYPSFSRMTKEDMQALYAYFMHGVKPVAQPDKQPDISWPLSMRWPLGIWRMMFSPSPKDFTPAPGTDPEIARGDYLVTGPGHCGACHTPRGFAMQEKALDAAGGPDFLSGGAPIDNWVAPSLRNDPVVGLGRWSEDDIYTFLKSGRIDHSAVFGGMGDVVAWSTQYFTDDDLHAIAKYLKSLPPVPPSQGNYTYDPSTANMLASGNTASVPGADTYVKECAICHRNDGGGVARMFPPLAGNPVVVTENPTSLVNVIAHGGVLPPSNWAPSAVAMPGYSKSLSAQQIADVVNFIRTSWGNKAPGTVTAADVTKLRDTGAPVSSSGWNSVSSGWSVFLPQPYGSGWTFAPQTHTGQDAAQ.

The first 23 residues, 1 to 23 (MINRLKVTFSAAAFSLLAGTALA), serve as a signal peptide directing secretion. Cytochrome c domains lie at 31 to 134 (ALVQ…MHGV), 178 to 293 (PEIA…KSLP), and 317 to 407 (TASV…RTSW). Residues cysteine 45, cysteine 48, histidine 49, cysteine 193, cysteine 196, histidine 197, cysteine 330, cysteine 333, and histidine 334 each contribute to the heme c site.

The alcohol dehydrogenase multicomponent enzyme system is composed of a dehydrogenase subunit I (AdhA) and a cytochrome c subunit II (AdhB). Heme c serves as cofactor.

Its subcellular location is the cell membrane. It catalyses the reaction ethanol + a ubiquinone = a ubiquinol + acetaldehyde. In terms of biological role, cytochrome c component of the alcohol dehydrogenase multicomponent enzyme system which is involved in the production of acetic acid and in the ethanol oxidase respiratory chain. Quinohemoprotein alcohol dehydrogenase (ADH) catalyzes the oxidation of ethanol to acetaldehyde by transferring electrons to the ubiquinone embedded in the membrane phospholipids. The electrons transfer from ethanol to membranous ubiquinone occurs from pyrroloquinoline quinone (PQQ) to one heme c in subunit I (AdhA), and finally to two heme c in subunit II (AdhB). Besides ubiquinone reduction, ADH also has a ubiquinol (QH2) oxidation reaction which mediates electron transfer from ubiquinol to the non-energy generating bypass oxidase system. The electrons transfer occurs from ubiquinol (QH2) to the additional heme c within subunit II (AdhB). The chain is Alcohol dehydrogenase (quinone), cytochrome c subunit from Gluconacetobacter polyoxogenes (Acetobacter polyoxogenes).